A 292-amino-acid chain; its full sequence is MNERYELNKNLAQMLKGGVIMDVTTPEQAVIAEKAGAVAVMALERVPADIRARGGVARMSDPKIIKEIKAAVSIPVMAKVRIGHFVEAQILEALGIDFIDESEVLTPADEMYHIDKWAFKIPFVCGARNLGEALRRIGEGASMIRTKGEAGTGNVVEAVRHMRIINAEIKRLTTLREDELMAAAKELQAPYELVKYVAQHGRLPVVNFAAGGIATPADAALMMQLGADGVFVGSGIFKSQNPEKMAEAIVKAVTYYDKPEILAEVSEGLGEAMQSIDIRKLDEKDLYASRGW.

Aspartate 22 lines the D-ribose 5-phosphate pocket. Residue lysine 79 is the Schiff-base intermediate with D-ribose 5-phosphate of the active site. Position 151 (glycine 151) interacts with D-ribose 5-phosphate. Residue arginine 163 participates in D-glyceraldehyde 3-phosphate binding. D-ribose 5-phosphate is bound by residues glycine 212 and 233-234 (GS).

Belongs to the PdxS/SNZ family. As to quaternary structure, in the presence of PdxT, forms a dodecamer of heterodimers.

It catalyses the reaction aldehydo-D-ribose 5-phosphate + D-glyceraldehyde 3-phosphate + L-glutamine = pyridoxal 5'-phosphate + L-glutamate + phosphate + 3 H2O + H(+). Its pathway is cofactor biosynthesis; pyridoxal 5'-phosphate biosynthesis. Catalyzes the formation of pyridoxal 5'-phosphate from ribose 5-phosphate (RBP), glyceraldehyde 3-phosphate (G3P) and ammonia. The ammonia is provided by the PdxT subunit. Can also use ribulose 5-phosphate and dihydroxyacetone phosphate as substrates, resulting from enzyme-catalyzed isomerization of RBP and G3P, respectively. The polypeptide is Pyridoxal 5'-phosphate synthase subunit PdxS (Thermoanaerobacter pseudethanolicus (strain ATCC 33223 / 39E) (Clostridium thermohydrosulfuricum)).